The primary structure comprises 391 residues: Formate-dependent phosphoribosylglycinamide formyltransferase (391 aa).

Residues 18–19 and E78 contribute to the N(1)-(5-phospho-beta-D-ribosyl)glycinamide site; that span reads EL. ATP is bound by residues R110, K151, 156 to 161, 191 to 194, and E199; these read SSGKGQ and EEFI. The region spanning 115-305 is the ATP-grasp domain; that stretch reads DLASKDLKIK…EFELHLRAFL (191 aa). The Mg(2+) site is built by E264 and E276. N(1)-(5-phospho-beta-D-ribosyl)glycinamide contacts are provided by residues D283, K353, and 360-361; that span reads RR.

This sequence belongs to the PurK/PurT family. Homodimer.

It carries out the reaction N(1)-(5-phospho-beta-D-ribosyl)glycinamide + formate + ATP = N(2)-formyl-N(1)-(5-phospho-beta-D-ribosyl)glycinamide + ADP + phosphate + H(+). Its pathway is purine metabolism; IMP biosynthesis via de novo pathway; N(2)-formyl-N(1)-(5-phospho-D-ribosyl)glycinamide from N(1)-(5-phospho-D-ribosyl)glycinamide (formate route): step 1/1. Its function is as follows. Involved in the de novo purine biosynthesis. Catalyzes the transfer of formate to 5-phospho-ribosyl-glycinamide (GAR), producing 5-phospho-ribosyl-N-formylglycinamide (FGAR). Formate is provided by PurU via hydrolysis of 10-formyl-tetrahydrofolate. The polypeptide is Formate-dependent phosphoribosylglycinamide formyltransferase (Prochlorococcus marinus (strain MIT 9301)).